The following is a 1184-amino-acid chain: DNA polymerase III subunit alpha (1184 aa).

The protein belongs to the DNA polymerase type-C family. DnaE subfamily. The Pol III holoenzyme complex contains at least 10 different subunits organized into 3 functionally essential subassemblies: the Pol III core, the beta sliding clamp processivity factor and the clamp-loading complex. The Pol III core (subunits alpha, epsilon and theta) contains the polymerase and the 3'-5' exonuclease proofreading activities. The polymerase is tethered to the template via the dimeric beta sliding clamp processivity factor. The clamp loader (also called gamma complex) assembles the beta sliding clamp onto the primed template and plays a central role in the organization and communication at the replication fork. The clamp-loading complex contains delta, delta', psi and chi, and 3 copies of either or both of two different DnaX proteins, gamma and tau. The DNA replisome complex has a single clamp loader (3 tau and 1 each of delta, delta', psi and chi subunits) which binds 3 Pol III cores (1 core on the leading strand and 2 on the lagging strand) each with a beta sliding clamp dimer. Interacts with the beta-sliding clamp (DnaN). Co-immunoprecipitates with DarG in the presence and absence of darT.

Its subcellular location is the cytoplasm. It catalyses the reaction DNA(n) + a 2'-deoxyribonucleoside 5'-triphosphate = DNA(n+1) + diphosphate. Functionally, DNA polymerase III is a complex, multichain enzyme responsible for most of the replicative synthesis in bacteria. Pol III also exhibits 3' to 5' exonuclease activity. The alpha chain is the DNA polymerase. The protein is DNA polymerase III subunit alpha (dnaE1) of Mycobacterium tuberculosis (strain ATCC 25618 / H37Rv).